A 306-amino-acid chain; its full sequence is Mitochondrial 2-oxoglutarate/malate carrier protein (306 aa).

3 Solcar repeats span residues 7–95, 103–194, and 203–292; these read VPNV…LLER, LSFG…AKQA, and DGIF…MNAA. The next 6 membrane-spanning stretches (helical) occupy residues 9–38, 72–93, 108–122, 172–192, 205–226, and 268–286; these read NVVK…NRMQ, SAGL…AFLL, KAVL…GSFV, PTVL…SQAK, IFCH…SMPV, and FTPY…FIIL.

This sequence belongs to the mitochondrial carrier (TC 2.A.29) family. Interacts with ant-1.1 and ced-9. As to expression, ubiquitously expressed, but highly expressed in the anterior pharynx.

Its subcellular location is the mitochondrion. The protein localises to the mitochondrion inner membrane. The catalysed reaction is (S)-malate(in) + 2-oxoglutarate(out) = (S)-malate(out) + 2-oxoglutarate(in). The enzyme catalyses malonate(in) + 2-oxoglutarate(out) = malonate(out) + 2-oxoglutarate(in). It catalyses the reaction succinate(in) + 2-oxoglutarate(out) = succinate(out) + 2-oxoglutarate(in). It carries out the reaction maleate(in) + 2-oxoglutarate(out) = maleate(out) + 2-oxoglutarate(in). The catalysed reaction is oxaloacetate(in) + 2-oxoglutarate(out) = oxaloacetate(out) + 2-oxoglutarate(in). Its function is as follows. Catalyzes the transport of 2-oxoglutarate (alpha-oxoglutarate) across the inner mitochondrial membrane in an electroneutral exchange for malate. Can also exchange 2-oxoglutarate for other dicarboxylic acids such as malonate, succinate, maleate and oxaloacetate, although with lower affinity. Contributes to several metabolic processes, including the malate-aspartate shuttle, the oxoglutarate/isocitrate shuttle, in gluconeogenesis from lactate, and in nitrogen metabolism. Maintains mitochondrial fusion and fission events, and the organization and morphology of cristae. Regulator of apoptosis, insulin secretion and germline proliferation. Furthermore, plays a role in the oxidative stress response regulating endogenous levels of reactive oxygen species (ROS). Involved in the regulation of lin-35/Rb-mediated apoptosis in the germline. The chain is Mitochondrial 2-oxoglutarate/malate carrier protein from Caenorhabditis elegans.